The chain runs to 470 residues: Argininosuccinate lyase (470 aa).

This sequence belongs to the lyase 1 family. Argininosuccinate lyase subfamily.

It is found in the cytoplasm. The enzyme catalyses 2-(N(omega)-L-arginino)succinate = fumarate + L-arginine. Its pathway is amino-acid biosynthesis; L-arginine biosynthesis; L-arginine from L-ornithine and carbamoyl phosphate: step 3/3. The protein is Argininosuccinate lyase of Leptospira interrogans serogroup Icterohaemorrhagiae serovar copenhageni (strain Fiocruz L1-130).